The primary structure comprises 225 residues: Uridylate kinase (225 aa).

An ATP-binding site is contributed by 9 to 10 (GS). Residue glycine 46 coordinates UMP. The ATP site is built by glycine 47 and arginine 51. UMP contacts are provided by residues aspartate 67 and 115–121 (THPAHTT). ATP-binding residues include threonine 141, asparagine 142, tyrosine 147, and aspartate 150.

Belongs to the UMP kinase family. As to quaternary structure, homohexamer.

It localises to the cytoplasm. The catalysed reaction is UMP + ATP = UDP + ADP. It functions in the pathway pyrimidine metabolism; CTP biosynthesis via de novo pathway; UDP from UMP (UMPK route): step 1/1. Its activity is regulated as follows. Inhibited by UTP. Catalyzes the reversible phosphorylation of UMP to UDP. The sequence is that of Uridylate kinase from Methanococcus maripaludis (strain C7 / ATCC BAA-1331).